A 620-amino-acid polypeptide reads, in one-letter code: 1-deoxy-D-xylulose-5-phosphate synthase (620 aa).

Residues His80 and 121–123 (GHS) each bind thiamine diphosphate. Residue Asp152 participates in Mg(2+) binding. Thiamine diphosphate contacts are provided by residues 153–154 (GA), Asn181, Tyr288, and Glu370. Asn181 is a binding site for Mg(2+).

The protein belongs to the transketolase family. DXPS subfamily. Homodimer. Mg(2+) serves as cofactor. The cofactor is thiamine diphosphate.

The enzyme catalyses D-glyceraldehyde 3-phosphate + pyruvate + H(+) = 1-deoxy-D-xylulose 5-phosphate + CO2. The protein operates within metabolic intermediate biosynthesis; 1-deoxy-D-xylulose 5-phosphate biosynthesis; 1-deoxy-D-xylulose 5-phosphate from D-glyceraldehyde 3-phosphate and pyruvate: step 1/1. Catalyzes the acyloin condensation reaction between C atoms 2 and 3 of pyruvate and glyceraldehyde 3-phosphate to yield 1-deoxy-D-xylulose-5-phosphate (DXP). This Escherichia coli (strain SMS-3-5 / SECEC) protein is 1-deoxy-D-xylulose-5-phosphate synthase.